A 737-amino-acid polypeptide reads, in one-letter code: MDNTTNINTNERSSNTDFSSAPNIKGLNSHTQLQFDADSRVFVSDAMAKNSKQLLYAHIYNYLIKNNYWNSAAKFLSEADLPLSRINGSASGEKTSLNASLKQGLMDIASKGGIVSEDGLLPSKMLMDANDTFLLEWWEIFQSLFNGDLESGYQQDHNPLRERIIPILPANSKSNMPSHFSNLPPNVIPPTQNSFPVSEESFRPNGDGSNFNLNDPTNRNVSERFLSRTSGVYDKQNSANFTPDTAINSDIAGQQYATINLHKHFNDLQSPAQPQQSSQQQIQQPQRQPQHQQQQQQQQQQQQQQQQQQQQQQQTPYPIVNPQMVPHIPSENSHSTGLMPSVPPTNQQFNAQTQSSMFSDQQRFFQYQLHHQNQGQAPSFQQSQSGRFDDMNAMKMFFQQQALQQNSLQQNLGNQNYQSNTRNNTAEETTPTNDNNANGNSLLQEHIRARFNKMKTIPQQMKNQNTVANPVVSDITSQQQYMHMMMQRMAANQQLQNSAFPPDTNRIAPANNAMPLQPGNMGPPVIENPGMRQTNPSGQNPMINMQPLYQNVSSAMHAFAPQQQFHLPQHYKTNTSVPQNDSTSVFPLPNNNNNNNNNNNNNNNSNNSNNNNNNNNSNNTPTVSQPSSKRTSSSSTTPNITTTIQPKRKQRVGKTKTKESRKVAAAQKVMKSKKLEQNGDSAATNFINVTPKDSGGKGTVKVQNSNSQQQLNGSFSMDTETFDIFNIGDFSPDLMDS.

The interval methionine 1 to asparagine 23 is disordered. Positions serine 51–leucine 83 constitute a LisH domain. Disordered regions lie at residues threonine 191 to asparagine 220, leucine 268 to glutamine 347, glycine 413 to glycine 439, and lysine 572 to serine 660. A compositionally biased stretch (polar residues) spans aspartate 207–asparagine 220. A compositionally biased stretch (low complexity) spans glutamine 269–glutamine 314. Polar residues-rich tracts occupy residues serine 330–glutamine 347, threonine 421–glycine 439, and lysine 572–valine 585. Residues asparagine 590 to threonine 643 are compositionally biased toward low complexity. Positions proline 646 to threonine 655 are enriched in basic residues.

This sequence belongs to the MSS11 family. As to quaternary structure, interacts with FLO8, STE12 and TEC1.

It is found in the cytoplasm. The protein localises to the nucleus. Its function is as follows. Transcription factor that regulates pseudohyphal differentiation, invasive growth, floculation, adhesion and starch metabolism in response to nutrient availability. The chain is Transcription activator MSS11 (MSS11) from Saccharomyces cerevisiae (strain YJM789) (Baker's yeast).